The following is a 94-amino-acid chain: MSAEPEVRLTAWVHGRVQGVGFRWWTRSRALELGLTGFAANKPDGRVQVVAQGSREECERLLGLLEGGDTPGRVDKVIADWSDAREQITGFHER.

Positions 8–94 constitute an Acylphosphatase-like domain; sequence RLTAWVHGRV…REQITGFHER (87 aa). Residues arginine 23 and asparagine 41 contribute to the active site.

It belongs to the acylphosphatase family.

It carries out the reaction an acyl phosphate + H2O = a carboxylate + phosphate + H(+). The polypeptide is Acylphosphatase (acyP) (Mycobacterium sp. (strain JLS)).